The following is a 397-amino-acid chain: Protein PEP-RELATED DEVELOPMENT ARRESTED 1, chloroplastic (397 aa).

The transit peptide at 1–52 (MLQSIHLRFSSTPSPSKRESLIIPSVICSFPFTSSSFRPKQTQKLKRLVQFC) directs the protein to the chloroplast. Positions 315 to 334 (KDEGADNLSKEDDSSTEGRK) are enriched in basic and acidic residues. Residues 315–351 (KDEGADNLSKEDDSSTEGRKPSGLNGRGSVTGRKPLP) form a disordered region.

Interacts with FSD2 and MRL7. As to expression, highly expressed in young leaves, shoots and flowers. Expressed at low levels in stems and siliques.

Its subcellular location is the plastid. It is found in the chloroplast stroma. It localises to the chloroplast nucleoid. Plays an essential role in early steps of chloroplast development. May be involved in the redox control of plastid gene expression by maintening the redox state around chloroplast nucleoids. May positively regulate plastid-encoded RNA polymerase (PEP) activity, through binding to FSD2. This is Protein PEP-RELATED DEVELOPMENT ARRESTED 1, chloroplastic (PRDA1) from Arabidopsis thaliana (Mouse-ear cress).